We begin with the raw amino-acid sequence, 133 residues long: L-ectoine synthase (133 aa).

The protein belongs to the ectoine synthase family.

The enzyme catalyses (2S)-4-acetamido-2-aminobutanoate = L-ectoine + H2O. The protein operates within amine and polyamine biosynthesis; ectoine biosynthesis; L-ectoine from L-aspartate 4-semialdehyde: step 3/3. Its function is as follows. Catalyzes the circularization of gamma-N-acetyl-alpha,gamma-diaminobutyric acid (ADABA) to ectoine (1,4,5,6-tetrahydro-2-methyl-4-pyrimidine carboxylic acid), which is an excellent osmoprotectant. The polypeptide is L-ectoine synthase (Bordetella petrii (strain ATCC BAA-461 / DSM 12804 / CCUG 43448)).